A 232-amino-acid chain; its full sequence is Aquaporin Z (232 aa).

Transmembrane regions (helical) follow at residues A8–F28 and I33–I53. Residues N62 to A64 carry the NPA 1 motif. 3 consecutive transmembrane segments (helical) span residues I84–G104, M130–G150, and G159–V179. The NPA 2 motif lies at N185–A187. The helical transmembrane segment at V201–I221 threads the bilayer.

Belongs to the MIP/aquaporin (TC 1.A.8) family. As to quaternary structure, homotetramer.

The protein resides in the cell inner membrane. It carries out the reaction H2O(in) = H2O(out). Its function is as follows. Channel that permits osmotically driven movement of water in both directions. It is involved in the osmoregulation and in the maintenance of cell turgor during volume expansion in rapidly growing cells. It mediates rapid entry or exit of water in response to abrupt changes in osmolarity. This is Aquaporin Z from Vibrio parahaemolyticus serotype O3:K6 (strain RIMD 2210633).